The following is a 127-amino-acid chain: Holo-[acyl-carrier-protein] synthase (127 aa).

Mg(2+)-binding residues include aspartate 8 and glutamate 56.

Belongs to the P-Pant transferase superfamily. AcpS family. Requires Mg(2+) as cofactor.

Its subcellular location is the cytoplasm. The enzyme catalyses apo-[ACP] + CoA = holo-[ACP] + adenosine 3',5'-bisphosphate + H(+). Transfers the 4'-phosphopantetheine moiety from coenzyme A to a Ser of acyl-carrier-protein. This chain is Holo-[acyl-carrier-protein] synthase, found in Deinococcus deserti (strain DSM 17065 / CIP 109153 / LMG 22923 / VCD115).